The primary structure comprises 385 residues: 8-amino-7-oxononanoate synthase (385 aa).

Arg21 is a binding site for substrate. 108 to 109 (GF) is a binding site for pyridoxal 5'-phosphate. His133 is a substrate binding site. Pyridoxal 5'-phosphate contacts are provided by Ser179, His207, and Thr233. N6-(pyridoxal phosphate)lysine is present on Lys236. Thr352 serves as a coordination point for substrate.

It belongs to the class-II pyridoxal-phosphate-dependent aminotransferase family. BioF subfamily. In terms of assembly, homodimer. The cofactor is pyridoxal 5'-phosphate.

The catalysed reaction is 6-carboxyhexanoyl-[ACP] + L-alanine + H(+) = (8S)-8-amino-7-oxononanoate + holo-[ACP] + CO2. Its pathway is cofactor biosynthesis; biotin biosynthesis. In terms of biological role, catalyzes the decarboxylative condensation of pimeloyl-[acyl-carrier protein] and L-alanine to produce 8-amino-7-oxononanoate (AON), [acyl-carrier protein], and carbon dioxide. The protein is 8-amino-7-oxononanoate synthase of Pseudescherichia vulneris (Escherichia vulneris).